We begin with the raw amino-acid sequence, 128 residues long: MGLIWGLFSVIIASVAQLSLGFAASHLPPMTHLWDFIAALLAFGLDARILLLGLLGYLLSVFCWYKTLHKLALSKAYALLSMSYVLVWIASMVLPGWEGTFSLKALLGVACIMSGLMLIFLPMTKQRY.

Residues 1–2 (MG) are Cytoplasmic-facing. A helical transmembrane segment spans residues 3–23 (LIWGLFSVIIASVAQLSLGFA). Residues 24-35 (ASHLPPMTHLWD) are Periplasmic-facing. Residues 36–56 (FIAALLAFGLDARILLLGLLG) traverse the membrane as a helical segment. The Cytoplasmic portion of the chain corresponds to 57-76 (YLLSVFCWYKTLHKLALSKA). A helical transmembrane segment spans residues 77–97 (YALLSMSYVLVWIASMVLPGW). The Periplasmic segment spans residues 98-100 (EGT). The helical transmembrane segment at 101-121 (FSLKALLGVACIMSGLMLIFL) threads the bilayer. The Cytoplasmic segment spans residues 122 to 128 (PMTKQRY).

It belongs to the ArnF family. Heterodimer of ArnE and ArnF.

The protein localises to the cell inner membrane. Its pathway is bacterial outer membrane biogenesis; lipopolysaccharide biosynthesis. Functionally, translocates 4-amino-4-deoxy-L-arabinose-phosphoundecaprenol (alpha-L-Ara4N-phosphoundecaprenol) from the cytoplasmic to the periplasmic side of the inner membrane. The protein is Probable 4-amino-4-deoxy-L-arabinose-phosphoundecaprenol flippase subunit ArnF of Escherichia coli O9:H4 (strain HS).